A 147-amino-acid chain; its full sequence is Large ribosomal subunit protein uL15 (147 aa).

A disordered region spans residues 1 to 42 (MTIKLHHLRPAPGSKSNKIRVGRGEGGKRGKTAGRGTKGTKA).

It belongs to the universal ribosomal protein uL15 family. As to quaternary structure, part of the 50S ribosomal subunit.

Binds to the 23S rRNA. The protein is Large ribosomal subunit protein uL15 of Rhodococcus erythropolis (strain PR4 / NBRC 100887).